Consider the following 468-residue polypeptide: Probable cytosol aminopeptidase (468 aa).

The Mn(2+) site is built by Lys242 and Asp247. Lys254 is a catalytic residue. 3 residues coordinate Mn(2+): Asp265, Asp324, and Glu326. Arg328 is an active-site residue.

This sequence belongs to the peptidase M17 family. Mn(2+) serves as cofactor.

Its subcellular location is the cytoplasm. It catalyses the reaction Release of an N-terminal amino acid, Xaa-|-Yaa-, in which Xaa is preferably Leu, but may be other amino acids including Pro although not Arg or Lys, and Yaa may be Pro. Amino acid amides and methyl esters are also readily hydrolyzed, but rates on arylamides are exceedingly low.. The enzyme catalyses Release of an N-terminal amino acid, preferentially leucine, but not glutamic or aspartic acids.. Presumably involved in the processing and regular turnover of intracellular proteins. Catalyzes the removal of unsubstituted N-terminal amino acids from various peptides. The polypeptide is Probable cytosol aminopeptidase (Neisseria meningitidis serogroup A / serotype 4A (strain DSM 15465 / Z2491)).